We begin with the raw amino-acid sequence, 197 residues long: Nucleoid occlusion factor SlmA (197 aa).

An HTH tetR-type domain is found at 7–67 (INRREHILQC…GLIEFIEESL (61 aa)). The segment at residues 30–49 (TTAKLAAEVGVSEAALYRHF) is a DNA-binding region (H-T-H motif). Residues 109–136 (DALLGENERLRSRISQLFAKIETHLKQI) are a coiled coil.

The protein belongs to the nucleoid occlusion factor SlmA family. Homodimer. Interacts with FtsZ.

The protein localises to the cytoplasm. It localises to the nucleoid. Required for nucleoid occlusion (NO) phenomenon, which prevents Z-ring formation and cell division over the nucleoid. Acts as a DNA-associated cell division inhibitor that binds simultaneously chromosomal DNA and FtsZ, and disrupts the assembly of FtsZ polymers. SlmA-DNA-binding sequences (SBS) are dispersed on non-Ter regions of the chromosome, preventing FtsZ polymerization at these regions. The polypeptide is Nucleoid occlusion factor SlmA (Shewanella halifaxensis (strain HAW-EB4)).